The chain runs to 407 residues: Imidazolonepropionase (407 aa).

The Fe(3+) site is built by H72 and H74. Positions 72 and 74 each coordinate Zn(2+). Positions 81, 144, and 177 each coordinate 4-imidazolone-5-propanoate. Residue Y144 coordinates N-formimidoyl-L-glutamate. H242 serves as a coordination point for Fe(3+). A Zn(2+)-binding site is contributed by H242. 4-imidazolone-5-propanoate is bound at residue Q245. D317 is a Fe(3+) binding site. A Zn(2+)-binding site is contributed by D317. The N-formimidoyl-L-glutamate site is built by N319 and G321. A 4-imidazolone-5-propanoate-binding site is contributed by T322.

The protein belongs to the metallo-dependent hydrolases superfamily. HutI family. Requires Zn(2+) as cofactor. Fe(3+) serves as cofactor.

The protein localises to the cytoplasm. It carries out the reaction 4-imidazolone-5-propanoate + H2O = N-formimidoyl-L-glutamate. The protein operates within amino-acid degradation; L-histidine degradation into L-glutamate; N-formimidoyl-L-glutamate from L-histidine: step 3/3. Its function is as follows. Catalyzes the hydrolytic cleavage of the carbon-nitrogen bond in imidazolone-5-propanoate to yield N-formimidoyl-L-glutamate. It is the third step in the universal histidine degradation pathway. The chain is Imidazolonepropionase from Aliivibrio salmonicida (strain LFI1238) (Vibrio salmonicida (strain LFI1238)).